A 631-amino-acid polypeptide reads, in one-letter code: Phosphomethylpyrimidine synthase (631 aa).

Substrate contacts are provided by residues N239, M268, Y297, H333, 353–355 (SRG), 394–397 (DGLR), and E433. H437 contributes to the Zn(2+) binding site. Residue Y460 participates in substrate binding. A Zn(2+)-binding site is contributed by H501. [4Fe-4S] cluster-binding residues include C581, C584, and C589.

It belongs to the ThiC family. In terms of assembly, homodimer. [4Fe-4S] cluster serves as cofactor.

It carries out the reaction 5-amino-1-(5-phospho-beta-D-ribosyl)imidazole + S-adenosyl-L-methionine = 4-amino-2-methyl-5-(phosphooxymethyl)pyrimidine + CO + 5'-deoxyadenosine + formate + L-methionine + 3 H(+). It participates in cofactor biosynthesis; thiamine diphosphate biosynthesis. Catalyzes the synthesis of the hydroxymethylpyrimidine phosphate (HMP-P) moiety of thiamine from aminoimidazole ribotide (AIR) in a radical S-adenosyl-L-methionine (SAM)-dependent reaction. In Salmonella paratyphi A (strain AKU_12601), this protein is Phosphomethylpyrimidine synthase.